The sequence spans 187 residues: uncharacterized protein (187 aa).

An N-terminal signal peptide occupies residues 1–28 (MRLHRTNNSRRCTILLILALKIFDFVDT). N-linked (GlcNAc...) asparagine glycosylation is found at Asn58, Asn70, Asn156, and Asn168.

The protein resides in the secreted. This is an uncharacterized protein from Caenorhabditis elegans.